Here is a 122-residue protein sequence, read N- to C-terminus: Large ribosomal subunit protein uL14 (122 aa).

This sequence belongs to the universal ribosomal protein uL14 family. As to quaternary structure, part of the 50S ribosomal subunit. Forms a cluster with proteins L3 and L19. In the 70S ribosome, L14 and L19 interact and together make contacts with the 16S rRNA in bridges B5 and B8.

Functionally, binds to 23S rRNA. Forms part of two intersubunit bridges in the 70S ribosome. In Chlamydia abortus (strain DSM 27085 / S26/3) (Chlamydophila abortus), this protein is Large ribosomal subunit protein uL14.